The sequence spans 320 residues: MVAKLTDVAKLAGVSPTTVSRVINRKGYLSEKTITKVQAAMKTLGYKPNNLARSLQGKSAKLIGLIFPNISHIFYSELIEYLEIELFKHGYKAIICNSQNNPDKERDYLEMLEANQVDGIISSSHNLGIDDYEKVSAPIIAFDRNLAPNIPIVSSDNFEGGRMAAKLLKKHGCQHPIMIAGKDNSNSPTGLRQLGFKSVFAQAPIFHLSGELSIIRKEMEIKVILQNEKPDGIFLSDDMTAILTMKIANQLNITIPHELKIIGYDGTHFVENYYPYLTTIRQPIKDIAHLLVDVLLKKIDHQDTPKDYILPVGLLSGESV.

The region spanning 1-57 (MVAKLTDVAKLAGVSPTTVSRVINRKGYLSEKTITKVQAAMKTLGYKPNNLARSLQG) is the HTH lacI-type domain. The H-T-H motif DNA-binding region spans 5–24 (LTDVAKLAGVSPTTVSRVIN).

Functionally, negative regulator of scrB expression. This Streptococcus mutans serotype c (strain ATCC 700610 / UA159) protein is Sucrose operon repressor (scrR).